A 787-amino-acid polypeptide reads, in one-letter code: ISWI one complex protein 3 (787 aa).

Polar residues predominate over residues 1–22; that stretch reads MDSPSNSIQNLQQEAQGSSSAQ. Disordered stretches follow at residues 1–137, 672–693, and 749–787; these read MDSP…AHEQ, ILEQ…LPKD, and TEYD…RQRT. Over residues 40 to 50 the composition is skewed to low complexity; sequence DQSVSVSQSSD. Over residues 79-92 the composition is skewed to basic residues; sequence KPKRKRPAPPKKKA. Residues 100-137 are compositionally biased toward basic and acidic residues; that stretch reads SNDKVEKKKTTSIAKDGKPTLKTNDKKVAPKPKPAHEQ. A compositionally biased stretch (polar residues) spans 675–689; it reads QKSTTDNNPSINTNP. The span at 751–777 shows a compositional bias: acidic residues; it reads YDSEEYVDDEEDDEADIYDDNDNDSSF. Residues 778–787 are compositionally biased toward basic and acidic residues; that stretch reads DDGRVKRQRT.

In terms of assembly, component of the ISW1A complex, which at least consists of ISW1 and IOC3.

It localises to the nucleus. Functions as a component of the ISW1A complex, which acts in remodeling the chromatin by catalyzing an ATP-dependent alteration in the structure of nucleosomal DNA. The ISW1A complex represses gene expression at initiation through specific positioning of a promoter proximal dinucleosome. The protein is ISWI one complex protein 3 (IOC3) of Saccharomyces cerevisiae (strain ATCC 204508 / S288c) (Baker's yeast).